The following is a 269-amino-acid chain: Bis(5'-nucleosyl)-tetraphosphatase, symmetrical (269 aa).

Belongs to the Ap4A hydrolase family.

The catalysed reaction is P(1),P(4)-bis(5'-adenosyl) tetraphosphate + H2O = 2 ADP + 2 H(+). Hydrolyzes diadenosine 5',5'''-P1,P4-tetraphosphate to yield ADP. This is Bis(5'-nucleosyl)-tetraphosphatase, symmetrical from Vibrio cholerae serotype O1 (strain ATCC 39541 / Classical Ogawa 395 / O395).